The chain runs to 597 residues: MAASSSIVSVAPTASSVPVLPSSCDFSNLREIKKQLLLIAGLTRERGLLHSSKWSAELAFSLPALPLSELQPPPPITEEDAQDMDAYTLAKAYFDVKEYDRAAHFLHGCNSKKAYFLYMYSRYLSGEKKKDDETVDSLGPLEKGQVKNEALRELRVELSKKHQARELDGFGLYLYGVVLRKLDLVKEAIDVFVEATHVLPLHWGAWLELCNLITDKEMLKFLSLPDTWMKEFFLAHIYTELQLIEEALQKYQNLIDVGFSKSSYIVSQIAVAYHNIRDIDKALSIFNELRKQDPYRIENMDTFSNLLYVRSMKSELSYLAHNLCEIDKYRVETCCVIGNYYSLRSQHEKAALYFQRALKLNPRYLGAWTLMGHEYMEMKNTSAAIQAYRHAIEVNKRDYRAWYGLGQTYEILKMPFYCLYYYRRAHQLRPNDSRMLVALGECYEKLNQLVEAKKCYWRAYAVGDVEKMALVKLAKLHEQLTESEQAAQCYIKYIQDIYSCGEIVEHLEESTAFRYLAQYYFKCKLWDEASACAQKCCAFNDTREEGKALLRQILQLRNQGETPSTEIPAPFFLPASLSANNTPTRRVSPLNLSSVTP.

At Ala-2 the chain carries N-acetylalanine. 3 TPR repeats span residues 27 to 63 (SNLREIKKQLLLIAGLTRERGLLHSSKWSAELAFSLP), 73 to 112 (PPPITEEDAQDMDAYTLAKAYFDVKEYDRAAHFLHGCNSK), and 114 to 144 (AYFLYMYSRYLSGEKKKDDETVDSLGPLEKG). Residue Lys-147 forms a Glycyl lysine isopeptide (Lys-Gly) (interchain with G-Cter in SUMO2) linkage. 8 TPR repeats span residues 169–200 (GFGLYLYGVVLRKLDLVKEAIDVFVEATHVLP), 229–259 (MKEFFLAHIYTELQLIEEALQKYQNLIDVGF), 263–293 (SYIVSQIAVAYHNIRDIDKALSIFNELRKQD), 297–327 (IENMDTFSNLLYVRSMKSELSYLAHNLCEID), 331–361 (VETCCVIGNYYSLRSQHEKAALYFQRALKLN), 366–395 (GAWTLMGHEYMEMKNTSAAIQAYRHAIEVN), 400–432 (RAWYGLGQTYEILKMPFYCLYYYRRAHQLRPND), and 433–466 (SRMLVALGECYEKLNQLVEAKKCYWRAYAVGDVE). Tyr-273 carries the post-translational modification Phosphotyrosine. Lys-467 bears the N6-acetyllysine mark. TPR repeat units lie at residues 468-500 (MALVKLAKLHEQLTESEQAAQCYIKYIQDIYSC) and 504-540 (VEHLEESTAFRYLAQYYFKCKLWDEASACAQKCCAFN). Residues Thr-562 and Thr-565 each carry the phosphothreonine modification. Ser-578 carries the post-translational modification Phosphoserine. Residue Thr-582 is modified to Phosphothreonine. A phosphoserine mark is found at Ser-588 and Ser-593. Thr-596 carries the post-translational modification Phosphothreonine.

It belongs to the APC8/CDC23 family. As to quaternary structure, the mammalian APC/C is composed at least of 14 distinct subunits ANAPC1, ANAPC2, CDC27/APC3, ANAPC4, ANAPC5, CDC16/APC6, ANAPC7, CDC23/APC8, ANAPC10, ANAPC11, CDC26/APC12, ANAPC13, ANAPC15 and ANAPC16 that assemble into a complex of at least 19 chains with a combined molecular mass of around 1.2 MDa; APC/C interacts with FZR1 and FBXO5. Interacts with FBXO43; the interaction is direct. In terms of processing, phosphorylated. Phosphorylation on Thr-562 occurs specifically during mitosis.

The protein operates within protein modification; protein ubiquitination. Functionally, component of the anaphase promoting complex/cyclosome (APC/C), a cell cycle-regulated E3 ubiquitin ligase that controls progression through mitosis and the G1 phase of the cell cycle. The APC/C complex acts by mediating ubiquitination and subsequent degradation of target proteins: it mainly mediates the formation of 'Lys-11'-linked polyubiquitin chains and, to a lower extent, the formation of 'Lys-48'- and 'Lys-63'-linked polyubiquitin chains. The APC/C complex catalyzes assembly of branched 'Lys-11'-/'Lys-48'-linked branched ubiquitin chains on target proteins. The polypeptide is Cell division cycle protein 23 homolog (CDC23) (Bos taurus (Bovine)).